The chain runs to 583 residues: Extracellular serine/threonine protein kinase four-jointed (583 aa).

The Cytoplasmic portion of the chain corresponds to 1 to 78 (MYDIKRLEAG…RRRSLQRRAC (78 aa)). A helical; Signal-anchor for type II membrane protein transmembrane segment spans residues 79–99 (LLSILAAFVFGMALGVVVPMF). Residues 100–583 (GLPRHQDSPP…LGQVQKCQGS (484 aa)) are Extracellular-facing. A disordered region spans residues 179–222 (RTASGRYRKGPERRLSKKMPERVQPQETSRSPTTSPTNPTSEHQ). A compositionally biased stretch (basic and acidic residues) spans 187–199 (KGPERRLSKKMPE). Residues 206 to 219 (TSRSPTTSPTNPTS) are compositionally biased toward low complexity. Residues N310 and N379 are each glycosylated (N-linked (GlcNAc...) asparagine). The disordered stretch occupies residues 384-421 (MQSERQAQSQPHGLLKRLGAASSPGSAHQSNAIEETGT). N-linked (GlcNAc...) asparagine glycosylation occurs at N491.

The protein belongs to the FJX1/FJ family. In terms of processing, proteolytically cleaved to yield a secreted protein. In terms of tissue distribution, in the eye disk, expressed in a gradient ahead of the morphogenetic furrow, high at the equator and low at the poles of the eye. In the leg disk, expressed in concentric rings, possibly corresponding to segmental boundaries. In the wing disk, expression is localized in the wing pouch; low in peripheral regions and high towards the center.

Its subcellular location is the golgi apparatus membrane. The protein localises to the secreted. The catalysed reaction is L-seryl-[protein] + ATP = O-phospho-L-seryl-[protein] + ADP + H(+). It carries out the reaction L-threonyl-[protein] + ATP = O-phospho-L-threonyl-[protein] + ADP + H(+). Golgi serine/threonine protein kinase required for intermediate growth in the proximal-distal axis. Phosphorylates specific residues within extracellular cadherin domains of Fat (ft) and Dachsous (ds) as they transit through the Golgi. Acts in ommatidial polarity determination as a secondary signal downstream of Notch, JAK/STAT and wingless. Also necessary for the initiation, up-regulation or maintenance of Notch ligand, Serrate (Ser) expression in legs, thereby participating in a feedback loop with N signaling. Sufficient for joint formation and growth in the leg. The sequence is that of Extracellular serine/threonine protein kinase four-jointed from Drosophila melanogaster (Fruit fly).